A 254-amino-acid chain; its full sequence is Large ribosomal subunit protein uL4 (254 aa).

This sequence belongs to the universal ribosomal protein uL4 family. As to quaternary structure, part of the 50S ribosomal subunit.

One of the primary rRNA binding proteins, this protein initially binds near the 5'-end of the 23S rRNA. It is important during the early stages of 50S assembly. It makes multiple contacts with different domains of the 23S rRNA in the assembled 50S subunit and ribosome. In terms of biological role, forms part of the polypeptide exit tunnel. The sequence is that of Large ribosomal subunit protein uL4 from Methanothermobacter thermautotrophicus (strain ATCC 29096 / DSM 1053 / JCM 10044 / NBRC 100330 / Delta H) (Methanobacterium thermoautotrophicum).